A 565-amino-acid chain; its full sequence is Arginine--tRNA ligase (565 aa).

The 'HIGH' region motif lies at 128-138; it reads ANPTGPLHVGH.

Belongs to the class-I aminoacyl-tRNA synthetase family. As to quaternary structure, monomer.

It is found in the cytoplasm. It catalyses the reaction tRNA(Arg) + L-arginine + ATP = L-arginyl-tRNA(Arg) + AMP + diphosphate. The chain is Arginine--tRNA ligase from Delftia acidovorans (strain DSM 14801 / SPH-1).